Reading from the N-terminus, the 278-residue chain is UPF0761 membrane protein NT05HA_1801 (278 aa).

Transmembrane regions (helical) follow at residues 32–52 (MLAIVPLIMVVFSIFSAFPVF), 88–108 (QMSAVGIISLIVVALMLINSI), 123–143 (PIFTSFAIYWLILTLGPLLVG), 168–188 (LLSFVPFLSTWFIFTVIYMVV), 203–223 (LIAAVFFTLGKQAFAWYIVTF), and 232–252 (AMATLPIMLLWIQLSWTFVLL).

Belongs to the UPF0761 family.

It localises to the cell inner membrane. In Aggregatibacter aphrophilus (strain NJ8700) (Haemophilus aphrophilus), this protein is UPF0761 membrane protein NT05HA_1801.